The following is a 308-amino-acid chain: RNA pseudouridylate synthase domain-containing protein 1 (308 aa).

Met-1 is modified (N-acetylmethionine). Asp-67 is an active-site residue. The disordered stretch occupies residues 257–292 (APDPDPSEGGPGPCSPCTPLPGPGRPPPPPETEVQR). The segment covering 269–287 (PCSPCTPLPGPGRPPPPPE) has biased composition (pro residues).

It belongs to the pseudouridine synthase RluA family.

The sequence is that of RNA pseudouridylate synthase domain-containing protein 1 (RPUSD1) from Bos taurus (Bovine).